The primary structure comprises 225 residues: Cytidylate kinase (225 aa).

11 to 19 (GPAAAGKST) is an ATP binding site.

It belongs to the cytidylate kinase family. Type 1 subfamily.

The protein resides in the cytoplasm. The enzyme catalyses CMP + ATP = CDP + ADP. The catalysed reaction is dCMP + ATP = dCDP + ADP. The chain is Cytidylate kinase from Bacillus cereus (strain G9842).